A 169-amino-acid polypeptide reads, in one-letter code: uncharacterized protein (169 aa).

The Nudix hydrolase domain occupies 35–163; that stretch reads LIGRGTFILL…PYCPDSLQAL (129 aa). Residues 81 to 103 carry the Nudix box motif; it reads YADSAARELEEELGIRDAVLREH. Residues E88 and E92 each coordinate Mg(2+).

This sequence belongs to the Nudix hydrolase family. It depends on Mg(2+) as a cofactor.

This is an uncharacterized protein from Pseudomonas aeruginosa (strain ATCC 15692 / DSM 22644 / CIP 104116 / JCM 14847 / LMG 12228 / 1C / PRS 101 / PAO1).